A 183-amino-acid chain; its full sequence is MIPRKAFLTKGTGVHKDRLASFELALRDAKIEKYNLVSVSSILPPNCKLVTREEGLSELKPGAIVHCVLARNDTNEPHRLMASAIGTAVPVNEDNYGYISEHHSFGEEEIIAGEYAEDLAATMLATTLGIEFNAEMAWHEREQVYKASGHIFDTFHICQTAAGDKNGKWTTVVAAMVFVTSKC.

Serine 41 bears the Pyruvic acid (Ser) mark.

This sequence belongs to the PdaD family. Requires pyruvate as cofactor.

It catalyses the reaction L-arginine + H(+) = agmatine + CO2. This chain is Pyruvoyl-dependent arginine decarboxylase 2 (pdaD2), found in Methanosarcina acetivorans (strain ATCC 35395 / DSM 2834 / JCM 12185 / C2A).